The chain runs to 279 residues: tRNA pseudouridine synthase B (279 aa).

Asp38 serves as the catalytic Nucleophile.

The protein belongs to the pseudouridine synthase TruB family. Type 1 subfamily.

It carries out the reaction uridine(55) in tRNA = pseudouridine(55) in tRNA. In terms of biological role, responsible for synthesis of pseudouridine from uracil-55 in the psi GC loop of transfer RNAs. In Acholeplasma laidlawii (strain PG-8A), this protein is tRNA pseudouridine synthase B.